Reading from the N-terminus, the 544-residue chain is uncharacterized protein (544 aa).

Residues 1-22 (MYFSQNAIILVMLMFVISAVFY) form the signal peptide.

This is an uncharacterized protein from Methanocaldococcus jannaschii (strain ATCC 43067 / DSM 2661 / JAL-1 / JCM 10045 / NBRC 100440) (Methanococcus jannaschii).